Consider the following 667-residue polypeptide: Soluble guanylate cyclase 89Da (667 aa).

Residue His104 participates in heme binding. Positions Ala337–Arg364 are disordered. The segment covering Asp347–Asp358 has biased composition (acidic residues). Residues Gln427–Ser455 adopt a coiled-coil conformation. Positions Ser491–Glu617 constitute a Guanylate cyclase domain.

The protein belongs to the adenylyl cyclase class-4/guanylyl cyclase family. As to quaternary structure, heterodimer; with Gyc88E, in the presence of magnesium or manganese. It depends on heme as a cofactor.

The protein localises to the cytoplasm. The enzyme catalyses GTP = 3',5'-cyclic GMP + diphosphate. Its activity is regulated as follows. Probably not activated by nitric oxide (NO). Heterodimer also exhibits some stimulation, some compounds (SIN-1 and two of the NONOates) that were ineffective at stimulating Gyc-88E alone did stimulate the heterodimer. Its function is as follows. Heterodimers with Gyc-89Da and Gyc-89Db are activated in response to changing oxygen concentrations, alerting flies to hypoxic environments. Under normal oxygen concentrations, oxygen binds to the heme group and results in low levels of guanylyl cyclase activity. When exposed to reduced oxygen concentrations, the oxygen dissociates from the heme group resulting in activation of the enzyme. The protein is Soluble guanylate cyclase 89Da of Drosophila melanogaster (Fruit fly).